Consider the following 833-residue polypeptide: cGMP-specific 3',5'-cyclic phosphodiesterase (833 aa).

Position 60 is a phosphoserine (S60). The tract at residues 82-101 is disordered; that stretch reads FLSDSGKKEQMPLTSPRFDS. 2 consecutive GAF domains span residues 122–272 and 304–461; these read DVTA…GIVL and SLEV…GLGI. Positions 494–818 constitute a PDEase domain; it reads ETRELQALAA…QKWQALADQQ (325 aa). H571 acts as the Proton donor in catalysis. Residues H575, H611, D612, and D722 each contribute to the Zn(2+) site. Residue D612 coordinates Mg(2+). Q775 provides a ligand contact to 3',5'-cyclic GMP.

The protein belongs to the cyclic nucleotide phosphodiesterase family. It depends on Zn(2+) as a cofactor. Requires Mg(2+) as cofactor. Phosphorylation is regulated by binding of cGMP to the two allosteric sites. Phosphorylation by PRKG1 leads to its activation.

The catalysed reaction is 3',5'-cyclic GMP + H2O = GMP + H(+). It functions in the pathway purine metabolism; 3',5'-cyclic GMP degradation; GMP from 3',5'-cyclic GMP: step 1/1. Its function is as follows. Plays a role in signal transduction by regulating the intracellular concentration of cyclic nucleotides. This phosphodiesterase catalyzes the specific hydrolysis of cGMP to 5'-GMP. Specifically regulates nitric-oxide-generated cGMP. The polypeptide is cGMP-specific 3',5'-cyclic phosphodiesterase (Pde5a) (Rattus norvegicus (Rat)).